A 465-amino-acid polypeptide reads, in one-letter code: Cysteine--tRNA ligase (465 aa).

Zn(2+) is bound at residue cysteine 30. A 'HIGH' region motif is present at residues 32–42; the sequence is ITVYDYCHVGH. Residues cysteine 214, histidine 239, and glutamate 243 each coordinate Zn(2+). Residues 271-275 carry the 'KMSKS' region motif; that stretch reads KMSKS. Lysine 274 is a binding site for ATP.

This sequence belongs to the class-I aminoacyl-tRNA synthetase family. Monomer. The cofactor is Zn(2+).

The protein resides in the cytoplasm. The enzyme catalyses tRNA(Cys) + L-cysteine + ATP = L-cysteinyl-tRNA(Cys) + AMP + diphosphate. This Burkholderia multivorans (strain ATCC 17616 / 249) protein is Cysteine--tRNA ligase.